The following is a 1679-amino-acid chain: Maestro heat-like repeat-containing protein family member 2A (1679 aa).

15 HEAT repeats span residues 68 to 91 (ATTDPCVVMNALIRCLQMPEISTQ), 92 to 128 (RKMNIYNIMQEIIQQEGEMEEHCIQRLVAIASKQMRD), 190 to 229 (MPYMGITLATIFTMLRLANEAKMRQVICSAMETFCETVQF), 293 to 313 (EQVYDYIPLLLAEFQGTGHWP), 314 to 350 (LFPSLLQVLRQILEASVTTNTPIPPMLLHPIFTELHV), 380 to 417 (SYPKELMKFFFSQVEMSKEAVRVGTLALIRAVVSADDP), 422 to 459 (KTIYLAIRVVKNTLSDTRSKVRMAILRIIGQLVLSGFQ), 571 to 610 (PAPQKLLARLLVLMSSPYKGEGRGIAMLNLLRTLSQSIAP), 614 to 654 (DMWE…SLKK), 737 to 774 (KTVLNVLQDFEERIQESEQSWQIGAWRKDHPWRRETVK), 848 to 887 (SALTGLIVVIIKAEPPDHLVSPVRSMAMDALSQLSTMKPF), 991 to 1028 (GQFGVLVGLIAPCTCDAHRRTRLASINVLSSLLDLHVS), 1219 to 1261 (DPLM…SHGP), 1387 to 1425 (KLLRPVVLMLEKGAGQDKDETLQVLSLRALGNMALGAPR), and 1632 to 1669 (MDLVGLRNSLQDLQLDSDAGVRRAALETLKVLDSCNQH).

In Mus musculus (Mouse), this protein is Maestro heat-like repeat-containing protein family member 2A (Mroh2a).